Reading from the N-terminus, the 459-residue chain is Ribulose bisphosphate carboxylase large chain (459 aa).

Lys-4 is modified (N6,N6,N6-trimethyllysine). Substrate contacts are provided by Asn-113 and Thr-163. Lys-165 acts as the Proton acceptor in catalysis. Position 167 (Lys-167) interacts with substrate. Mg(2+)-binding residues include Lys-191, Asp-193, and Glu-194. Lys-191 is subject to N6-carboxylysine. His-284 (proton acceptor) is an active-site residue. Substrate contacts are provided by Arg-285, His-317, and Ser-369.

The protein belongs to the RuBisCO large chain family. Type I subfamily. Heterohexadecamer of 8 large chains and 8 small chains; disulfide-linked. The disulfide link is formed within the large subunit homodimers. Mg(2+) is required as a cofactor. Post-translationally, the disulfide bond which can form in the large chain dimeric partners within the hexadecamer appears to be associated with oxidative stress and protein turnover.

The protein localises to the plastid. Its subcellular location is the chloroplast. It carries out the reaction 2 (2R)-3-phosphoglycerate + 2 H(+) = D-ribulose 1,5-bisphosphate + CO2 + H2O. The enzyme catalyses D-ribulose 1,5-bisphosphate + O2 = 2-phosphoglycolate + (2R)-3-phosphoglycerate + 2 H(+). Functionally, ruBisCO catalyzes two reactions: the carboxylation of D-ribulose 1,5-bisphosphate, the primary event in carbon dioxide fixation, as well as the oxidative fragmentation of the pentose substrate in the photorespiration process. Both reactions occur simultaneously and in competition at the same active site. In Garrya elliptica (Wavyleaf silktassel), this protein is Ribulose bisphosphate carboxylase large chain.